We begin with the raw amino-acid sequence, 129 residues long: Small ribosomal subunit protein uS11 (129 aa).

Belongs to the universal ribosomal protein uS11 family. Part of the 30S ribosomal subunit. Interacts with proteins S7 and S18. Binds to IF-3.

In terms of biological role, located on the platform of the 30S subunit, it bridges several disparate RNA helices of the 16S rRNA. Forms part of the Shine-Dalgarno cleft in the 70S ribosome. The protein is Small ribosomal subunit protein uS11 of Levilactobacillus brevis (strain ATCC 367 / BCRC 12310 / CIP 105137 / JCM 1170 / LMG 11437 / NCIMB 947 / NCTC 947) (Lactobacillus brevis).